The primary structure comprises 120 residues: Small ribosomal subunit protein bS16 (120 aa).

A disordered region spans residues lysine 84–alanine 120. Positions arginine 103 to alanine 120 are enriched in low complexity.

It belongs to the bacterial ribosomal protein bS16 family.

The chain is Small ribosomal subunit protein bS16 from Beijerinckia indica subsp. indica (strain ATCC 9039 / DSM 1715 / NCIMB 8712).